We begin with the raw amino-acid sequence, 86 residues long: MAHKKGASSSRNGRDSAAQRLGVKRYGGQVVKAGEILVRQRGTKFHPGVNVGRGGDDTLFAKTAGAVEFGIKRGRKTVSIVGSTTA.

Residues 1 to 21 are disordered; the sequence is MAHKKGASSSRNGRDSAAQRL.

This sequence belongs to the bacterial ribosomal protein bL27 family.

The polypeptide is Large ribosomal subunit protein bL27 (rpmA) (Mycobacterium tuberculosis (strain CDC 1551 / Oshkosh)).